The sequence spans 99 residues: Small ribosomal subunit protein bS20 (99 aa).

The protein belongs to the bacterial ribosomal protein bS20 family.

In terms of biological role, binds directly to 16S ribosomal RNA. The sequence is that of Small ribosomal subunit protein bS20 from Synechococcus sp. (strain CC9311).